The primary structure comprises 715 residues: Polyribonucleotide nucleotidyltransferase (715 aa).

Mg(2+)-binding residues include Asp493 and Asp499. A KH domain is found at 560 to 619 (PRMITIKINPEKIRDVIGKGGSVIRALTEETGTTIDISDDGVVTIASTSSEGMAEAKKRI). The 69-residue stretch at 629 to 697 (GQVYEGTVLK…EKGRVRLSAK (69 aa)) folds into the S1 motif domain.

The protein belongs to the polyribonucleotide nucleotidyltransferase family. Mg(2+) is required as a cofactor.

It is found in the cytoplasm. The catalysed reaction is RNA(n+1) + phosphate = RNA(n) + a ribonucleoside 5'-diphosphate. Involved in mRNA degradation. Catalyzes the phosphorolysis of single-stranded polyribonucleotides processively in the 3'- to 5'-direction. This is Polyribonucleotide nucleotidyltransferase from Burkholderia multivorans (strain ATCC 17616 / 249).